The chain runs to 73 residues: Conotoxin Cl14.8 (73 aa).

The N-terminal stretch at 1–19 (MKLSVTFIALMLTMTLTQG) is a signal peptide. Positions 20–47 (FVLQAIDGRDNSGLDDLSEADSMEHQLQ) are excised as a propeptide.

It belongs to the conotoxin L superfamily. In terms of processing, contains 2 disulfide bonds. Expressed by the venom duct.

It is found in the secreted. The protein is Conotoxin Cl14.8 of Californiconus californicus (California cone).